We begin with the raw amino-acid sequence, 194 residues long: MSQTDVLDLYKQAGAFHEGRFLLASGRQSPYFMQSTTLLQHPRALMELGGLMSQKILDAGLKPDFIVGPAMGGVTLAYEVARQLSETLPDVRAIFAEKDGSGGMKLREAFAVRPGETFVAVEDVLTTGGSLLRAVRAVEGQGGQCIGLCCIIDRRQQTGPLSGYPLMSLKELYFDTYASHEVPGWLAERPLQEI.

5-phospho-alpha-D-ribose 1-diphosphate is bound by residues Lys-98 and 122-130; that span reads EDVLTTGGS. Orotate-binding residues include Thr-126 and Arg-154.

It belongs to the purine/pyrimidine phosphoribosyltransferase family. PyrE subfamily. As to quaternary structure, homodimer. Requires Mg(2+) as cofactor.

It catalyses the reaction orotidine 5'-phosphate + diphosphate = orotate + 5-phospho-alpha-D-ribose 1-diphosphate. It participates in pyrimidine metabolism; UMP biosynthesis via de novo pathway; UMP from orotate: step 1/2. In terms of biological role, catalyzes the transfer of a ribosyl phosphate group from 5-phosphoribose 1-diphosphate to orotate, leading to the formation of orotidine monophosphate (OMP). In Deinococcus radiodurans (strain ATCC 13939 / DSM 20539 / JCM 16871 / CCUG 27074 / LMG 4051 / NBRC 15346 / NCIMB 9279 / VKM B-1422 / R1), this protein is Orotate phosphoribosyltransferase.